The sequence spans 309 residues: Malate dehydrogenase (309 aa).

Residues Gly10–Gly15 and Asp34 each bind NAD(+). The substrate site is built by Arg83 and Arg89. NAD(+)-binding positions include Asn96 and Val119–Asn121. The substrate site is built by Asn121 and Arg152. His176 functions as the Proton acceptor in the catalytic mechanism.

The protein belongs to the LDH/MDH superfamily. MDH type 3 family.

The catalysed reaction is (S)-malate + NAD(+) = oxaloacetate + NADH + H(+). Functionally, catalyzes the reversible oxidation of malate to oxaloacetate. This is Malate dehydrogenase from Desulforudis audaxviator (strain MP104C).